Consider the following 295-residue polypeptide: Light-independent protochlorophyllide reductase iron-sulfur ATP-binding protein (295 aa).

ATP-binding positions include 39 to 44 (GIGKST) and K68. S43 is a binding site for Mg(2+). C124 and C158 together coordinate [4Fe-4S] cluster. 209–210 (NR) lines the ATP pocket.

This sequence belongs to the NifH/BchL/ChlL family. Homodimer. Protochlorophyllide reductase is composed of three subunits; ChlL, ChlN and ChlB. Requires [4Fe-4S] cluster as cofactor.

The catalysed reaction is chlorophyllide a + oxidized 2[4Fe-4S]-[ferredoxin] + 2 ADP + 2 phosphate = protochlorophyllide a + reduced 2[4Fe-4S]-[ferredoxin] + 2 ATP + 2 H2O. The protein operates within porphyrin-containing compound metabolism; chlorophyll biosynthesis (light-independent). Component of the dark-operative protochlorophyllide reductase (DPOR) that uses Mg-ATP and reduced ferredoxin to reduce ring D of protochlorophyllide (Pchlide) to form chlorophyllide a (Chlide). This reaction is light-independent. The L component serves as a unique electron donor to the NB-component of the complex, and binds Mg-ATP. The polypeptide is Light-independent protochlorophyllide reductase iron-sulfur ATP-binding protein (Prochlorococcus marinus (strain MIT 9312)).